A 539-amino-acid chain; its full sequence is Beta-agarase A (539 aa).

The first 19 residues, 1–19, serve as a signal peptide directing secretion; sequence MKKNYLLLYFIFLLCGSIA. One can recognise a GH16 domain in the interval 21–289; that stretch reads QDWNGIPVPA…WIRVYKPVAV (269 aa). Substrate is bound by residues Trp73, 82–92, 96–98, and Glu144; these read NAPQAWTNGSQ and QAQ. Glu147 (nucleophile) is an active-site residue. Catalysis depends on Glu152, which acts as the Proton donor. Positions 176 and 271 each coordinate substrate. The tract at residues 332 to 353 is disordered; the sequence is WANTNDIGSRDRGASNGRNNIN.

The protein belongs to the glycosyl hydrolase 16 family. As to quaternary structure, monomer. Post-translationally, proteolytically cleaved into mature beta-agarase A catalytic chain (AgaAc).

Its subcellular location is the secreted. It catalyses the reaction Hydrolysis of (1-&gt;4)-beta-D-galactosidic linkages in agarose, giving the tetramer as the predominant product.. In terms of biological role, cleaves the beta-1,4-linkages between beta-D-galactose and alpha-L-3,6-anhydro-galactose residues in agarose. Cleaves agarose in a random manner with retention of the anomeric-bond configuration, producing beta-anomers that give rise progressively to alpha-anomers when mutarotation takes place. The chain is Beta-agarase A (agaA) from Zobellia galactanivorans (strain DSM 12802 / CCUG 47099 / CIP 106680 / NCIMB 13871 / Dsij).